Consider the following 470-residue polypeptide: Synaptotagmin-17 (470 aa).

The tract at residues 54 to 112 is disordered; sequence PPWLMASRSNDKDGDSVHTASDVPLTPRTNSPDGRRSSSDTSKSTYSLTRRISSLDSRR. Residues 92 to 112 show a composition bias toward low complexity; sequence SDTSKSTYSLTRRISSLDSRR. A phosphoserine mark is found at Ser-114 and Ser-115. 2 C2 domains span residues 180-306 and 317-451; these read QLGM…HWWK and ELGE…EQWH.

This sequence belongs to the synaptotagmin family.

It localises to the membrane. In terms of biological role, plays a role in dendrite formation by melanocytes. This Mus musculus (Mouse) protein is Synaptotagmin-17 (Syt17).